We begin with the raw amino-acid sequence, 314 residues long: MKKYKSEFIPEFKKNYLSPVYWFTWFVLGMIAGISMFPPSFRDPVLAKIGRWVGRLSRKARRRATINLSLCFPEKSDTEREIIVDNMFATALQSIVMMAELAIRGPEKFQKRVFWKGLEILEEIRHNNRNVIFLVPHGWSVDIPAMLLAAQGEKMAAMFHQQRNPVIDYVWNSVRRKFGGRLHSREDGIKPFIQSVRQGYWGYYLPDQDHGPEYSEFADFFATYKATLPIIGRLMNISQAMIIPLFPVYDEKKHFLTIEVRPPMDACIASADNKMIARQMNKTVEILVGSHPEQYIWVLKLLKTRKSNEADPYP.

The helical transmembrane segment at 17–37 (LSPVYWFTWFVLGMIAGISMF) threads the bilayer. An HXXXXD motif motif is present at residues 137-142 (HGWSVD).

This sequence belongs to the LpxL/LpxM/LpxP family. LpxM subfamily.

It localises to the cell inner membrane. It catalyses the reaction an alpha-Kdo-(2-&gt;4)-alpha-Kdo-(2-&gt;6)-(acyl)-lipid IVA + a fatty acyl-[ACP] = an alpha-Kdo-(2-&gt;4)-alpha-Kdo-(2-&gt;6)-lipid A + holo-[ACP]. It functions in the pathway glycolipid biosynthesis; KDO(2)-lipid A biosynthesis; KDO(2)-lipid A from CMP-3-deoxy-D-manno-octulosonate and lipid IV(A): step 4/4. It participates in bacterial outer membrane biogenesis; lipopolysaccharide biosynthesis. Functionally, catalyzes the transfer of an acyl chain from an acyl-[acyl-carrier-protein] (ACP) to a Kdo(2)-(acyl)-lipid IV(A) to form a Kdo(2)-lipid A. This is Lipid A biosynthesis acyltransferase 2 from Shigella flexneri.